The primary structure comprises 220 residues: Late transcription elongation factor OPG087 (220 aa).

This sequence belongs to the orthopoxvirus OPG087 family. Interacts with H5 and A18. Might be part of a transcription complex composed at least of OPG087, OPG145, and OPG110.

Involved in postreplicative transcription elongation on intermediate and late genes. This is Late transcription elongation factor OPG087 (OPG087) from Cynomys gunnisoni (Gunnison's prairie dog).